A 513-amino-acid polypeptide reads, in one-letter code: Sterol 14-alpha demethylase (513 aa).

Residues 10 to 30 (FTLVSAYAAAGLLAIIVLNLL) traverse the membrane as a helical segment. N-linked (GlcNAc...) asparagine glycosylation is found at asparagine 37 and asparagine 406. Cysteine 453 lines the heme pocket.

It belongs to the cytochrome P450 family. Requires heme as cofactor.

It localises to the endoplasmic reticulum membrane. The enzyme catalyses a 14alpha-methyl steroid + 3 reduced [NADPH--hemoprotein reductase] + 3 O2 = a Delta(14) steroid + formate + 3 oxidized [NADPH--hemoprotein reductase] + 4 H2O + 4 H(+). It catalyses the reaction a 14alpha-methyl steroid + reduced [NADPH--hemoprotein reductase] + O2 = a 14alpha-hydroxymethyl steroid + oxidized [NADPH--hemoprotein reductase] + H2O + H(+). It carries out the reaction a 14alpha-hydroxymethyl steroid + reduced [NADPH--hemoprotein reductase] + O2 = a 14alpha-formyl steroid + oxidized [NADPH--hemoprotein reductase] + 2 H2O + H(+). The catalysed reaction is a 14alpha-formyl steroid + reduced [NADPH--hemoprotein reductase] + O2 = a Delta(14) steroid + formate + oxidized [NADPH--hemoprotein reductase] + H2O + 2 H(+). The enzyme catalyses lanosterol + 3 reduced [NADPH--hemoprotein reductase] + 3 O2 = 4,4-dimethyl-5alpha-cholesta-8,14,24-trien-3beta-ol + formate + 3 oxidized [NADPH--hemoprotein reductase] + 4 H2O + 4 H(+). It catalyses the reaction lanosterol + reduced [NADPH--hemoprotein reductase] + O2 = 32-hydroxylanosterol + oxidized [NADPH--hemoprotein reductase] + H2O + H(+). It carries out the reaction 32-hydroxylanosterol + reduced [NADPH--hemoprotein reductase] + O2 = 32-oxolanosterol + oxidized [NADPH--hemoprotein reductase] + 2 H2O + H(+). The catalysed reaction is 32-oxolanosterol + reduced [NADPH--hemoprotein reductase] + O2 = 4,4-dimethyl-5alpha-cholesta-8,14,24-trien-3beta-ol + formate + oxidized [NADPH--hemoprotein reductase] + H2O + 2 H(+). The enzyme catalyses eburicol + 3 reduced [NADPH--hemoprotein reductase] + 3 O2 = 14-demethyleburicol + formate + 3 oxidized [NADPH--hemoprotein reductase] + 4 H2O + 4 H(+). It catalyses the reaction eburicol + reduced [NADPH--hemoprotein reductase] + O2 = 32-hydroxyeburicol + oxidized [NADPH--hemoprotein reductase] + H2O + H(+). It carries out the reaction 32-hydroxyeburicol + reduced [NADPH--hemoprotein reductase] + O2 = 32-oxoeburicol + oxidized [NADPH--hemoprotein reductase] + 2 H2O + H(+). The catalysed reaction is 32-oxoeburicol + reduced [NADPH--hemoprotein reductase] + O2 = 14-demethyleburicol + formate + oxidized [NADPH--hemoprotein reductase] + H2O + 2 H(+). Its pathway is steroid biosynthesis; sterol biosynthesis. Its function is as follows. Sterol 14alpha-demethylase, encoded by cyp51A, cyp51B and cyp51C, that plays a critical role in the third module of ergosterol biosynthesis pathway, being ergosterol the major sterol component in fungal membranes that participates in a variety of functions. The third module or late pathway involves the ergosterol synthesis itself through consecutive reactions that mainly occur in the endoplasmic reticulum (ER) membrane. In filamentous fungi, during the initial step of this module, lanosterol (lanosta-8,24-dien-3beta-ol) can be metabolized to eburicol. Sterol 14alpha-demethylase catalyzes the three-step oxidative removal of the 14alpha-methyl group (C-32) of both these sterols in the form of formate, and converts eburicol and lanosterol to 14-demethyleburicol (4,4,24-trimethylergosta-8,14,24(28)-trienol) and 4,4-dimethyl-5alpha-cholesta-8,14,24-trien-3beta-ol, respectively, which are further metabolized by other enzymes in the pathway to ergosterol. Can also use substrates not intrinsic to fungi, such as 24,25-dihydrolanosterol (DHL), producing 4,4'-dimethyl-8,14-cholestadien-3-beta-ol, but at lower rates than the endogenous substrates. Functionally, as a target of azole drugs, plays a crucial role in azole susceptibility. This chain is Sterol 14-alpha demethylase, found in Aspergillus flavus (strain ATCC 200026 / FGSC A1120 / IAM 13836 / NRRL 3357 / JCM 12722 / SRRC 167).